A 412-amino-acid chain; its full sequence is Multifunctional CCA protein (412 aa).

2 residues coordinate ATP: Gly8 and Arg11. Residues Gly8 and Arg11 each contribute to the CTP site. 2 residues coordinate Mg(2+): Asp21 and Asp23. Residues Arg91, Arg137, and Arg140 each contribute to the ATP site. CTP is bound by residues Arg91, Arg137, and Arg140. The HD domain occupies 228-329; sequence TGIHTLMTLS…VKLFDSIDAW (102 aa).

It belongs to the tRNA nucleotidyltransferase/poly(A) polymerase family. Bacterial CCA-adding enzyme type 1 subfamily. Monomer. Can also form homodimers and oligomers. Requires Mg(2+) as cofactor. It depends on Ni(2+) as a cofactor.

It catalyses the reaction a tRNA precursor + 2 CTP + ATP = a tRNA with a 3' CCA end + 3 diphosphate. The catalysed reaction is a tRNA with a 3' CCA end + 2 CTP + ATP = a tRNA with a 3' CCACCA end + 3 diphosphate. Its function is as follows. Catalyzes the addition and repair of the essential 3'-terminal CCA sequence in tRNAs without using a nucleic acid template. Adds these three nucleotides in the order of C, C, and A to the tRNA nucleotide-73, using CTP and ATP as substrates and producing inorganic pyrophosphate. tRNA 3'-terminal CCA addition is required both for tRNA processing and repair. Also involved in tRNA surveillance by mediating tandem CCA addition to generate a CCACCA at the 3' terminus of unstable tRNAs. While stable tRNAs receive only 3'-terminal CCA, unstable tRNAs are marked with CCACCA and rapidly degraded. The polypeptide is Multifunctional CCA protein (Escherichia coli O7:K1 (strain IAI39 / ExPEC)).